The primary structure comprises 1242 residues: DNA-directed RNA polymerase RPB2 homolog (1242 aa).

The C4-type zinc-finger motif lies at 1180 to 1201; that stretch reads CRNCGEPAIYNASHPIYKCMNC.

Belongs to the RNA polymerase beta chain family. In terms of assembly, part of the viral DNA-directed RNA polymerase that consists of 8 polII-like subunits (RPB1, RPB2, RPB3, RPB5, RPB6, RPB7, RPB9, RPB10), a capping enzyme and a termination factor.

It localises to the host cytoplasm. The protein localises to the virion. It catalyses the reaction RNA(n) + a ribonucleoside 5'-triphosphate = RNA(n+1) + diphosphate. In terms of biological role, catalytic component of the DNA-directed RNA polymerase (RNAP) that catalyzes the transcription in the cytoplasm of viral DNA into RNA using the four ribonucleoside triphosphates as substrates. Forms the polymerase active center together with RPB1. Part of the core element with the central large cleft, the clamp element that moves to open and close the cleft and the jaws that are thought to grab the incoming DNA template. The polypeptide is DNA-directed RNA polymerase RPB2 homolog (African swine fever virus (isolate Pig/Kenya/KEN-50/1950) (ASFV)).